We begin with the raw amino-acid sequence, 177 residues long: Large ribosomal subunit protein uL6 (177 aa).

The protein belongs to the universal ribosomal protein uL6 family. Part of the 50S ribosomal subunit.

Functionally, this protein binds to the 23S rRNA, and is important in its secondary structure. It is located near the subunit interface in the base of the L7/L12 stalk, and near the tRNA binding site of the peptidyltransferase center. The protein is Large ribosomal subunit protein uL6 of Laribacter hongkongensis (strain HLHK9).